A 162-amino-acid polypeptide reads, in one-letter code: Protein NrdI (162 aa).

It belongs to the NrdI family.

Probably involved in ribonucleotide reductase function. The chain is Protein NrdI from Streptococcus pyogenes serotype M28 (strain MGAS6180).